Reading from the N-terminus, the 139-residue chain is uncharacterized protein (139 aa).

Residues Asn54 to Ser75 are disordered.

This is an uncharacterized protein from Homo sapiens (Human).